We begin with the raw amino-acid sequence, 267 residues long: tRNA pseudouridine synthase A (267 aa).

The Nucleophile role is filled by aspartate 53. Position 114 (tyrosine 114) interacts with substrate.

Belongs to the tRNA pseudouridine synthase TruA family. Homodimer.

It carries out the reaction uridine(38/39/40) in tRNA = pseudouridine(38/39/40) in tRNA. Functionally, formation of pseudouridine at positions 38, 39 and 40 in the anticodon stem and loop of transfer RNAs. This is tRNA pseudouridine synthase A from Chlamydia muridarum (strain MoPn / Nigg).